Here is a 188-residue protein sequence, read N- to C-terminus: dCTP deaminase (188 aa).

Residues 111-116 (KSTYAR), 135-137 (TLE), glutamine 156, tyrosine 170, and glutamine 180 each bind dCTP. The Proton donor/acceptor role is filled by glutamate 137.

The protein belongs to the dCTP deaminase family. Homotrimer.

The catalysed reaction is dCTP + H2O + H(+) = dUTP + NH4(+). The protein operates within pyrimidine metabolism; dUMP biosynthesis; dUMP from dCTP (dUTP route): step 1/2. In terms of biological role, catalyzes the deamination of dCTP to dUTP. The sequence is that of dCTP deaminase from Polaromonas sp. (strain JS666 / ATCC BAA-500).